Consider the following 452-residue polypeptide: Isocitrate dehydrogenase [NADP], mitochondrial (452 aa).

Residues 1-39 constitute a mitochondrion transit peptide; it reads MAGYLRVVRSLCRASGSRPAWAPAALTAPTSQEQTRRHY. N6-acetyllysine occurs at positions 45, 48, 67, and 69. N6-acetyllysine; alternate is present on residues Lys80 and Lys106. N6-succinyllysine; alternate is present on residues Lys80 and Lys106. Residues 115–117 and Arg122 each bind NADP(+); that span reads TIT. Thr117 contacts substrate. Substrate-binding positions include 134-140 and Arg149; that span reads SPNGTIR. The residue at position 155 (Lys155) is an N6-acetyllysine. N6-acetyllysine; alternate is present on Lys166. Lys166 carries the post-translational modification N6-succinyllysine; alternate. Residue Arg172 participates in substrate binding. Residues Lys180 and Lys193 each carry the N6-acetyllysine; alternate modification. Lys180 and Lys193 each carry N6-succinyllysine; alternate. At Lys199 the chain carries N6-acetyllysine. Lys256 bears the N6-acetyllysine; alternate mark. Residue Lys256 is modified to N6-succinyllysine; alternate. Lys263, Lys272, Lys275, and Lys280 each carry N6-acetyllysine. At Lys282 the chain carries N6-acetyllysine; alternate. At Lys282 the chain carries N6-succinyllysine; alternate. Residue Asp291 coordinates Mn(2+). Lys299 lines the NADP(+) pocket. Residue Asp314 participates in Mn(2+) binding. NADP(+)-binding positions include 349–354 and Asn367; that span reads GTVTRH. Lys384 carries the post-translational modification N6-acetyllysine; alternate. Lys384 is subject to N6-succinyllysine; alternate. N6-acetyllysine occurs at positions 400, 413, and 442.

It belongs to the isocitrate and isopropylmalate dehydrogenases family. Homodimer. The cofactor is Mg(2+). Mn(2+) serves as cofactor. Acetylation at Lys-413 dramatically reduces catalytic activity. Deacetylated by SIRT3.

Its subcellular location is the mitochondrion. The catalysed reaction is D-threo-isocitrate + NADP(+) = 2-oxoglutarate + CO2 + NADPH. Functionally, plays a role in intermediary metabolism and energy production. It may tightly associate or interact with the pyruvate dehydrogenase complex. In Macaca fascicularis (Crab-eating macaque), this protein is Isocitrate dehydrogenase [NADP], mitochondrial (IDH2).